A 474-amino-acid chain; its full sequence is Synaptotagmin-17 (474 aa).

The disordered stretch occupies residues 54-112; sequence PAQTPPWLVSNRSEDKEGDSDNTTSEPPATPQDTSPDRRRSSSDTSRSTYSLTRRISSL. Over residues 96-112 the composition is skewed to low complexity; that stretch reads SDTSRSTYSLTRRISSL. C2 domains follow at residues 184–310 and 321–455; these read QLGM…HWWK and ELGE…EQWH.

Belongs to the synaptotagmin family.

The protein localises to the membrane. Functionally, may play a role in dendrite formation by melanocytes. This is Synaptotagmin-17 (syt17) from Xenopus tropicalis (Western clawed frog).